Here is a 337-residue protein sequence, read N- to C-terminus: 1-aminocyclopropane-1-carboxylate deaminase (337 aa).

Residue lysine 50 is modified to N6-(pyridoxal phosphate)lysine. The Nucleophile role is filled by serine 77.

This sequence belongs to the ACC deaminase/D-cysteine desulfhydrase family. As to quaternary structure, homotrimer. Pyridoxal 5'-phosphate serves as cofactor.

The enzyme catalyses 1-aminocyclopropane-1-carboxylate + H2O = 2-oxobutanoate + NH4(+). Its function is as follows. Catalyzes a cyclopropane ring-opening reaction, the irreversible conversion of 1-aminocyclopropane-1-carboxylate (ACC) to ammonia and alpha-ketobutyrate. Allows growth on ACC as a nitrogen source. The sequence is that of 1-aminocyclopropane-1-carboxylate deaminase from Rhizobium rhizogenes (strain K84 / ATCC BAA-868) (Agrobacterium radiobacter).